Consider the following 338-residue polypeptide: POU domain, class 4, transcription factor 3 (338 aa).

Residues 56–65 (RAEALAAVDI) carry the POU-IV box motif. A POU-specific domain is found at 179-256 (DVESDPRELE…VLQAWLEEAE (78 aa)). The homeobox DNA-binding region spans 274-333 (RKRKRTSIAAPEKRSLEAYFAIQPRPSSEKIAAIAEKLDLKKNVVRVWFCNQRQKQKRMK).

The protein belongs to the POU transcription factor family. Class-4 subfamily. Interacts with ISL1. Brain. Seems to be specific to the retina.

The protein localises to the nucleus. It localises to the cytoplasm. In terms of biological role, acts as a transcriptional activator. Acts by binding to sequences related to the consensus octamer motif 5'-ATGCAAAT-3' in the regulatory regions of its target genes. Involved in the auditory system development, required for terminal differentiation of hair cells in the inner ear. The sequence is that of POU domain, class 4, transcription factor 3 (POU4F3) from Homo sapiens (Human).